The chain runs to 295 residues: Ribosomal RNA small subunit methyltransferase H (295 aa).

Residues 36–38 (GGH), Asp-56, Leu-90, Asp-104, and His-111 each bind S-adenosyl-L-methionine.

The protein belongs to the methyltransferase superfamily. RsmH family.

Its subcellular location is the cytoplasm. The enzyme catalyses cytidine(1402) in 16S rRNA + S-adenosyl-L-methionine = N(4)-methylcytidine(1402) in 16S rRNA + S-adenosyl-L-homocysteine + H(+). Specifically methylates the N4 position of cytidine in position 1402 (C1402) of 16S rRNA. The polypeptide is Ribosomal RNA small subunit methyltransferase H (Dictyoglomus turgidum (strain DSM 6724 / Z-1310)).